Here is a 402-residue protein sequence, read N- to C-terminus: Tryptophan synthase beta chain (402 aa).

Lys92 carries the N6-(pyridoxal phosphate)lysine modification.

Belongs to the TrpB family. As to quaternary structure, tetramer of two alpha and two beta chains. Requires pyridoxal 5'-phosphate as cofactor.

The catalysed reaction is (1S,2R)-1-C-(indol-3-yl)glycerol 3-phosphate + L-serine = D-glyceraldehyde 3-phosphate + L-tryptophan + H2O. The protein operates within amino-acid biosynthesis; L-tryptophan biosynthesis; L-tryptophan from chorismate: step 5/5. In terms of biological role, the beta subunit is responsible for the synthesis of L-tryptophan from indole and L-serine. The protein is Tryptophan synthase beta chain of Staphylococcus epidermidis (strain ATCC 35984 / DSM 28319 / BCRC 17069 / CCUG 31568 / BM 3577 / RP62A).